We begin with the raw amino-acid sequence, 785 residues long: E3 UFM1-protein ligase 1 homolog (785 aa).

The segment at 404-483 is disordered; that stretch reads GGNASNQLDD…GGGGSNKKSV (80 aa).

Belongs to the UFL1 family.

In terms of biological role, E3 UFM1-protein ligase that mediates ufmylation of target proteins. The chain is E3 UFM1-protein ligase 1 homolog from Drosophila willistoni (Fruit fly).